Consider the following 1180-residue polypeptide: Lon protease homolog 2, peroxisomal (1180 aa).

Residues 19–366 (LPTCKLDSNL…ELINMINQLI (348 aa)) form the Lon N-terminal domain. Positions 416–465 (PISNRGNIKSFNNSENGNNNKTNGSGITSRRPKSNEDGGEVYDEEDDDEE) are disordered. Low complexity predominate over residues 422–444 (NIKSFNNSENGNNNKTNGSGITS). Positions 452–465 (DGGEVYDEEDDDEE) are enriched in acidic residues. An ATP-binding site is contributed by 667-674 (GPPGTGKT). Residues 924-1163 (NSRVGIVNGL…YDVMKILWGE (240 aa)) enclose the Lon proteolytic domain. Catalysis depends on residues Ser1032 and Lys1075.

This sequence belongs to the peptidase S16 family.

It is found in the peroxisome matrix. It carries out the reaction Hydrolysis of proteins in presence of ATP.. Functionally, ATP-dependent serine protease that mediates the selective degradation of misfolded and unassembled polypeptides in the peroxisomal matrix. Necessary for type 2 peroxisome targeting signal (PTS2)-containing protein processing and facilitates peroxisome matrix protein import. This chain is Lon protease homolog 2, peroxisomal, found in Scheffersomyces stipitis (strain ATCC 58785 / CBS 6054 / NBRC 10063 / NRRL Y-11545) (Yeast).